We begin with the raw amino-acid sequence, 52 residues long: Large ribosomal subunit protein bL32c (52 aa).

It belongs to the bacterial ribosomal protein bL32 family.

It is found in the plastid. The protein localises to the chloroplast. This is Large ribosomal subunit protein bL32c from Eucalyptus globulus subsp. globulus (Tasmanian blue gum).